The following is a 431-amino-acid chain: uncharacterized protein (431 aa).

The next 11 membrane-spanning stretches (helical) occupy residues 33-53, 63-83, 111-131, 143-163, 197-217, 241-261, 273-293, 318-338, 358-378, 383-403, and 407-427; these read VARV…VIYL, FSVF…ANGL, VSGM…PLWS, VALL…LGML, LVGF…MLMT, AHSI…PVLL, GVVI…LTAM, LIGG…PWIM, AAAV…AAAL, SLGW…PLSL, and TVVA…VALA.

To M.tuberculosis Rv1510 and Rv3630.

Its subcellular location is the cell membrane. This is an uncharacterized protein from Mycobacterium bovis (strain ATCC BAA-935 / AF2122/97).